Reading from the N-terminus, the 559-residue chain is Pentatricopeptide repeat-containing protein At4g38010 (559 aa).

PPR repeat units lie at residues 70 to 104 (SSFS…GFSP), 105 to 139 (DMFT…GFYD), 140 to 170 (DIYV…MPVR), 171 to 201 (DVVS…MDVE), 203 to 233 (NLAT…ILKR), 238 to 268 (SLET…LEKK), 269 to 304 (DKVS…GIKP), 305 to 339 (DGHI…GIKW), 340 to 370 (DTHI…IRSK), 371 to 405 (NVFT…GFKP), 406 to 440 (NLVT…EYNL), and 443 to 473 (KLEH…MPVK). The type E motif stretch occupies residues 478–554 (ICGAILSACK…VPGSSYIEKF (77 aa)).

This sequence belongs to the PPR family. PCMP-E subfamily.

This Arabidopsis thaliana (Mouse-ear cress) protein is Pentatricopeptide repeat-containing protein At4g38010 (PCMP-E45).